We begin with the raw amino-acid sequence, 317 residues long: MANNMTDTMTKFDTNNDSASLQQNGNKAGQSWFERPIPGIKQQLIAQLTAVETEPSTKCSSCHSVITNTALIFNCYVCPHCDHHLPMSARERLNWLLDQVEGELGQEFTAKDPLKFVDSKPYPDRMAEAQDKTKESEALIVLYGKLRNLDIVTCAFDFRFMGGSMGSVVGDRFVQAAEKALADKVPLVCFAASGGARMQEGLLSLMQMARTAAAIERLRIAGIPYVVVLTNPVYGGVTASLAMLGDIHLAEPKAMIGFAGKRVIEQTVRETLEEPFQRAEFLLKHGVVDEVVHRHQMIDTIYRLLAKLCSVPNVDAQ.

The interval 1-28 (MANNMTDTMTKFDTNNDSASLQQNGNKA) is disordered. Residues 55 to 317 (PSTKCSSCHS…LCSVPNVDAQ (263 aa)) form the CoA carboxyltransferase N-terminal domain. Zn(2+)-binding residues include C59, C62, C78, and C81. The segment at 59–81 (CSSCHSVITNTALIFNCYVCPHC) adopts a C4-type zinc-finger fold.

Belongs to the AccD/PCCB family. In terms of assembly, acetyl-CoA carboxylase is a heterohexamer composed of biotin carboxyl carrier protein (AccB), biotin carboxylase (AccC) and two subunits each of ACCase subunit alpha (AccA) and ACCase subunit beta (AccD). Zn(2+) serves as cofactor.

It localises to the cytoplasm. It carries out the reaction N(6)-carboxybiotinyl-L-lysyl-[protein] + acetyl-CoA = N(6)-biotinyl-L-lysyl-[protein] + malonyl-CoA. The protein operates within lipid metabolism; malonyl-CoA biosynthesis; malonyl-CoA from acetyl-CoA: step 1/1. Component of the acetyl coenzyme A carboxylase (ACC) complex. Biotin carboxylase (BC) catalyzes the carboxylation of biotin on its carrier protein (BCCP) and then the CO(2) group is transferred by the transcarboxylase to acetyl-CoA to form malonyl-CoA. This chain is Acetyl-coenzyme A carboxylase carboxyl transferase subunit beta, found in Psychrobacter arcticus (strain DSM 17307 / VKM B-2377 / 273-4).